The chain runs to 321 residues: PI-PLC X domain-containing protein 3 (321 aa).

Residues 22–197 (SIHSIPLTNL…DYQVLVFYHS (176 aa)) enclose the PI-PLC X-box domain. Active-site residues include His37 and His114.

Widely expressed, with highest levels in brain, followed by heart atrium. Not detected in small intestine, nor stomach.

The protein localises to the cytoplasm. The chain is PI-PLC X domain-containing protein 3 (Plcxd3) from Mus musculus (Mouse).